A 152-amino-acid chain; its full sequence is MFRGATLVNLDSKGRLTVPTRYREQLIESATGQMVCTIDIHRPCLLLYPLPEWEIIEQKLSRLSSMNPVERRVQRLLLGHASECQMDGAGRLLIAPVLRQHAGLTKEVMLVGQFNKFELWDETTWYQQVKEDIDAEQSATETLSERLQDLSL.

SpoVT-AbrB domains are found at residues 5 to 52 and 81 to 124; these read ATLV…PLPE and ASEC…DETT.

The protein belongs to the MraZ family. In terms of assembly, forms oligomers.

It localises to the cytoplasm. The protein localises to the nucleoid. In terms of biological role, negatively regulates its own expression and that of the subsequent genes in the proximal part of the division and cell wall (dcw) gene cluster. Acts by binding directly to DNA. May also regulate the expression of genes outside the dcw cluster. This Salmonella paratyphi A (strain ATCC 9150 / SARB42) protein is Transcriptional regulator MraZ.